A 219-amino-acid chain; its full sequence is N-(5'-phosphoribosyl)anthranilate isomerase (219 aa).

The protein belongs to the TrpF family.

The catalysed reaction is N-(5-phospho-beta-D-ribosyl)anthranilate = 1-(2-carboxyphenylamino)-1-deoxy-D-ribulose 5-phosphate. It functions in the pathway amino-acid biosynthesis; L-tryptophan biosynthesis; L-tryptophan from chorismate: step 3/5. In Chloroherpeton thalassium (strain ATCC 35110 / GB-78), this protein is N-(5'-phosphoribosyl)anthranilate isomerase.